The following is a 752-amino-acid chain: Cytosolic phospholipase A2 (752 aa).

Positions 1-178 are phospholipid binding; the sequence is MSFIDPYQHI…MKKLLGPKKS (178 aa). The residue at position 2 (S2) is a Phosphoserine. The region spanning 6–122 is the C2 domain; the sequence is PYQHIIVEHQ…KVGEKKEVPF (117 aa). Ca(2+) is bound by residues D40, T41, D43, N65, D93, A94, and N95. The PLA2c domain occupies 140–740; the sequence is SCPDLRFSMA…SNVEARKFFN (601 aa). Residue S228 is the Nucleophile of the active site. Phosphothreonine is present on T268. The interval 427–457 is disordered; sequence KHIVSNDSSDSDDEAQGPKGTENEDAEREYQ. S434, S435, and S437 each carry phosphoserine. Phosphoserine; by MAPK is present on S505. S511 and S515 each carry phosphoserine. A Glycyl lysine isopeptide (Lys-Gly) (interchain with G-Cter in SUMO2) cross-link involves residue K541. Residue D549 is the Proton acceptor of the active site. K606 is covalently cross-linked (Glycyl lysine isopeptide (Lys-Gly) (interchain with G-Cter in SUMO2)). 2 positions are modified to phosphoserine: S727 and S729.

Interacts with KAT5. Phosphorylated at both Ser-505 and Ser-727 in response to mitogenic stimuli. In brain tissue, expressed in low levels in olfactory mitral and granule cells, in hippocampal pyramidal cells and in dentate and cerebellar granule cells.

It is found in the cytoplasm. The protein resides in the golgi apparatus membrane. The protein localises to the nucleus envelope. It carries out the reaction a 1,2-diacyl-sn-glycero-3-phosphocholine + H2O = a 1-acyl-sn-glycero-3-phosphocholine + a fatty acid + H(+). The catalysed reaction is a 1-O-alkyl-2-acyl-sn-glycero-3-phosphocholine + H2O = a 1-O-alkyl-sn-glycero-3-phosphocholine + a fatty acid + H(+). The enzyme catalyses a 1-acyl-sn-glycero-3-phosphocholine + H2O = sn-glycerol 3-phosphocholine + a fatty acid + H(+). It catalyses the reaction 1-hexadecanoyl-2-(5Z,8Z,11Z,14Z-eicosatetraenoyl)-sn-glycero-3-phosphocholine + H2O = 1-hexadecanoyl-sn-glycero-3-phosphocholine + (5Z,8Z,11Z,14Z)-eicosatetraenoate + H(+). It carries out the reaction 1,2-di-(5Z,8Z,11Z,14Z-eicosatetraenoyl)-sn-glycero-3-phosphocholine + H2O = 1-(5Z,8Z,11Z,14Z-eicosatetraenoyl)-sn-glycero-3-phosphocholine + (5Z,8Z,11Z,14Z)-eicosatetraenoate + H(+). The catalysed reaction is 1-octadecanoyl-2-(5Z,8Z,11Z,14Z-eicosatetraenoyl)-sn-glycero-3-phosphocholine + H2O = 1-octadecanoyl-sn-glycero-3-phosphocholine + (5Z,8Z,11Z,14Z)-eicosatetraenoate + H(+). The enzyme catalyses 1-hexadecanoyl-2-(9Z,12Z-octadecadienoyl)-sn-glycero-3-phosphocholine + H2O = (9Z,12Z)-octadecadienoate + 1-hexadecanoyl-sn-glycero-3-phosphocholine + H(+). It catalyses the reaction 1-octadecanoyl-2-(9Z,12Z,15Z-octadecatrienoyl)-sn-glycero-3-phosphocholine + H2O = (9Z,12Z,15Z)-octadecatrienoate + 1-octadecanoyl-sn-glycero-3-phosphocholine + H(+). It carries out the reaction 1-(5Z,8Z,11Z,14Z-eicosatetraenoyl)-2-hexadecanoyl-sn-glycero-3-phosphocholine + H2O = 1-(5Z,8Z,11Z,14Z-eicosatetraenoyl)-sn-glycero-3-phosphocholine + hexadecanoate + H(+). The catalysed reaction is 1-O-hexadecyl-2-(5Z,8Z,11Z,14Z)-eicosatetraenoyl-sn-glycero-3-phosphocholine + H2O = 1-O-hexadecyl-sn-glycero-3-phosphocholine + (5Z,8Z,11Z,14Z)-eicosatetraenoate + H(+). The enzyme catalyses 1,2-di-(9Z-octadecenoyl)-sn-glycero-3-phospho-(1'-sn-glycerol) + H2O = 1-(9Z-octadecenoyl)-sn-glycero-3-phospho-(1'-sn-glycerol) + (9Z)-octadecenoate + H(+). It catalyses the reaction 1-octadecanoyl-2-(5Z,8Z,11Z,14Z-eicosatetraenoyl)-sn-glycero-3-phosphate + H2O = 1-octadecanoyl-sn-glycero-3-phosphate + (5Z,8Z,11Z,14Z)-eicosatetraenoate + H(+). It carries out the reaction 1-hexadecanoyl-sn-glycero-3-phosphocholine + H2O = sn-glycerol 3-phosphocholine + hexadecanoate + H(+). The catalysed reaction is 2-(prostaglandin E2)-sn-glycero-3-phosphoethanolamine + H2O = sn-glycero-3-phosphoethanolamine + prostaglandin E2 + H(+). The enzyme catalyses 2-[(15S)-hydroxy-(5Z,8Z,11Z,13E)-eicosatetraenoyl]-sn-glycero-3-phosphocholine + H2O = (15S)-hydroxy-(5Z,8Z,11Z,13E)-eicosatetraenoate + sn-glycerol 3-phosphocholine + H(+). It catalyses the reaction 2-[(15R)-hydroxy-(5Z,8Z,11Z,13E)-eicosatetraenoyl]-sn-glycero-3-phosphocholine + H2O = (15R)-hydroxy-(5Z,8Z,11Z,13E)-eicosatetraenoate + sn-glycerol 3-phosphocholine + H(+). It carries out the reaction 2-(prostaglandin E2)-sn-glycero-3-phosphocholine + H2O = prostaglandin E2 + sn-glycerol 3-phosphocholine + H(+). The catalysed reaction is 2-[(11R)-hydroxy-(5Z,8Z,12E,14Z)-eicosatetraenoyl]-sn-glycero-3-phosphocholine + H2O = (11R)-hydroxy-(5Z,8Z,12E,14Z)-eicosatetraenoate + sn-glycerol 3-phosphocholine + H(+). The enzyme catalyses 1-(5Z,8Z,11Z,14Z-eicosatetraenoyl)-2-O-hexadecyl-sn-glycero-3-phosphocholine + H2O = 2-O-hexadecyl-sn-glycero-3-phosphocholine + (5Z,8Z,11Z,14Z)-eicosatetraenoate + H(+). It catalyses the reaction 1-octadecanoyl-2-(5Z,8Z,11Z,14Z-eicosatetraenoyl)-sn-glycero-3-phosphocholine + glycerol = 1-(5Z,8Z,11Z,14Z-eicosatetraenoyl)-glycerol + 1-octadecanoyl-sn-glycero-3-phosphocholine. It carries out the reaction 1-octadecanoyl-2-(9Z,12Z,15Z-octadecatrienoyl)-sn-glycero-3-phosphocholine + glycerol = 1-(9Z,12Z,15Z-octadecatrienoyl)-glycerol + 1-octadecanoyl-sn-glycero-3-phosphocholine. Its pathway is lipid metabolism; arachidonate metabolism. It participates in membrane lipid metabolism; glycerophospholipid metabolism. It functions in the pathway lipid metabolism; prostaglandin biosynthesis. The protein operates within lipid metabolism; leukotriene B4 biosynthesis. Activated by cytosolic calcium, which is necessary for binding to membrane lipids. Activated by phosphorylation in response to mitogenic stimuli. Functionally, has primarily calcium-dependent phospholipase and lysophospholipase activities, with a major role in membrane lipid remodeling and biosynthesis of lipid mediators of the inflammatory response. Plays an important role in embryo implantation and parturition through its ability to trigger prostanoid production. Preferentially hydrolyzes the ester bond of the fatty acyl group attached at sn-2 position of phospholipids (phospholipase A2 activity). Selectively hydrolyzes sn-2 arachidonoyl group from membrane phospholipids, providing the precursor for eicosanoid biosynthesis via the cyclooxygenase pathway. In an alternative pathway of eicosanoid biosynthesis, hydrolyzes sn-2 fatty acyl chain of eicosanoid lysophopholipids to release free bioactive eicosanoids. Hydrolyzes the ester bond of the fatty acyl group attached at sn-1 position of phospholipids (phospholipase A1 activity) only if an ether linkage rather than an ester linkage is present at the sn-2 position. This hydrolysis is not stereospecific. Has calcium-independent phospholipase A2 and lysophospholipase activities in the presence of phosphoinositides. Has O-acyltransferase activity. Catalyzes the transfer of fatty acyl chains from phospholipids to a primary hydroxyl group of glycerol (sn-1 or sn-3), potentially contributing to monoacylglycerol synthesis. This chain is Cytosolic phospholipase A2 (Pla2g4a), found in Rattus norvegicus (Rat).